Reading from the N-terminus, the 379-residue chain is Alcohol dehydrogenase 2 (379 aa).

Residues Cys-47, Thr-49, His-69, Cys-99, Cys-102, Cys-105, Cys-113, and Cys-177 each contribute to the Zn(2+) site. An alcohol is bound by residues Thr-49 and His-69. NAD(+) is bound at residue Thr-49. NAD(+)-binding positions include 202–207 (GLGAVG), Asp-226, Lys-231, Thr-272, Val-295, 295–297 (VGV), Phe-322, and Arg-372.

It belongs to the zinc-containing alcohol dehydrogenase family. As to quaternary structure, homodimer. The cofactor is Zn(2+).

The protein resides in the cytoplasm. The enzyme catalyses a primary alcohol + NAD(+) = an aldehyde + NADH + H(+). It carries out the reaction a secondary alcohol + NAD(+) = a ketone + NADH + H(+). The polypeptide is Alcohol dehydrogenase 2 (ADH2) (Zea mays (Maize)).